The primary structure comprises 345 residues: Holliday junction branch migration complex subunit RuvB (345 aa).

A large ATPase domain (RuvB-L) region spans residues 4–185 (TDRLIAPSTQ…FGIVSRLEFY (182 aa)). Residues leucine 24, arginine 25, glycine 66, lysine 69, threonine 70, threonine 71, 132–134 (EDY), arginine 175, tyrosine 185, and arginine 222 each bind ATP. Residue threonine 70 coordinates Mg(2+). The interval 186–256 (TADELARIVH…IADAALKMLD (71 aa)) is small ATPAse domain (RuvB-S). Residues 259–345 (KLGFDVMDRK…KIGTGELWQQ (87 aa)) are head domain (RuvB-H). 3 residues coordinate DNA: arginine 295, arginine 314, and arginine 319.

Belongs to the RuvB family. In terms of assembly, homohexamer. Forms an RuvA(8)-RuvB(12)-Holliday junction (HJ) complex. HJ DNA is sandwiched between 2 RuvA tetramers; dsDNA enters through RuvA and exits via RuvB. An RuvB hexamer assembles on each DNA strand where it exits the tetramer. Each RuvB hexamer is contacted by two RuvA subunits (via domain III) on 2 adjacent RuvB subunits; this complex drives branch migration. In the full resolvosome a probable DNA-RuvA(4)-RuvB(12)-RuvC(2) complex forms which resolves the HJ.

The protein localises to the cytoplasm. It carries out the reaction ATP + H2O = ADP + phosphate + H(+). The RuvA-RuvB-RuvC complex processes Holliday junction (HJ) DNA during genetic recombination and DNA repair, while the RuvA-RuvB complex plays an important role in the rescue of blocked DNA replication forks via replication fork reversal (RFR). RuvA specifically binds to HJ cruciform DNA, conferring on it an open structure. The RuvB hexamer acts as an ATP-dependent pump, pulling dsDNA into and through the RuvAB complex. RuvB forms 2 homohexamers on either side of HJ DNA bound by 1 or 2 RuvA tetramers; 4 subunits per hexamer contact DNA at a time. Coordinated motions by a converter formed by DNA-disengaged RuvB subunits stimulates ATP hydrolysis and nucleotide exchange. Immobilization of the converter enables RuvB to convert the ATP-contained energy into a lever motion, pulling 2 nucleotides of DNA out of the RuvA tetramer per ATP hydrolyzed, thus driving DNA branch migration. The RuvB motors rotate together with the DNA substrate, which together with the progressing nucleotide cycle form the mechanistic basis for DNA recombination by continuous HJ branch migration. Branch migration allows RuvC to scan DNA until it finds its consensus sequence, where it cleaves and resolves cruciform DNA. This Methylobacillus flagellatus (strain ATCC 51484 / DSM 6875 / VKM B-1610 / KT) protein is Holliday junction branch migration complex subunit RuvB.